Reading from the N-terminus, the 39-residue chain is Photosystem II reaction center protein J (39 aa).

A helical membrane pass occupies residues 7–27 (IPLWVVAVIAGLGVIAVVGLF).

Belongs to the PsbJ family. As to quaternary structure, PSII is composed of 1 copy each of membrane proteins PsbA, PsbB, PsbC, PsbD, PsbE, PsbF, PsbH, PsbI, PsbJ, PsbK, PsbL, PsbM, PsbT, PsbX, PsbY, PsbZ, Psb30/Ycf12, peripheral proteins PsbO, CyanoQ (PsbQ), PsbU, PsbV and a large number of cofactors. It forms dimeric complexes.

It is found in the cellular thylakoid membrane. One of the components of the core complex of photosystem II (PSII). PSII is a light-driven water:plastoquinone oxidoreductase that uses light energy to abstract electrons from H(2)O, generating O(2) and a proton gradient subsequently used for ATP formation. It consists of a core antenna complex that captures photons, and an electron transfer chain that converts photonic excitation into a charge separation. The polypeptide is Photosystem II reaction center protein J (Gloeothece citriformis (strain PCC 7424) (Cyanothece sp. (strain PCC 7424))).